Consider the following 150-residue polypeptide: Ribonuclease HI (150 aa).

Residues 1–141 enclose the RNase H type-1 domain; that stretch reads MKSINAYTDG…VDVLARGQAM (141 aa). Residues Asp-9, Glu-47, Asp-69, and Asp-133 each coordinate Mg(2+).

Belongs to the RNase H family. As to quaternary structure, monomer. It depends on Mg(2+) as a cofactor.

The protein localises to the cytoplasm. It carries out the reaction Endonucleolytic cleavage to 5'-phosphomonoester.. Its function is as follows. Endonuclease that specifically degrades the RNA of RNA-DNA hybrids. This Xylella fastidiosa (strain 9a5c) protein is Ribonuclease HI.